The chain runs to 272 residues: Zinc transporter ZupT (272 aa).

The next 8 membrane-spanning stretches (helical) occupy residues 12-32 (ALAVTLAAGLATGLGSLMVVF), 40-60 (LLAFGLAFAGGAMVFVSLSEI), 76-96 (LGFTYGTLTFLGGMLLIMVID), 126-146 (LLTAVAITAHNFPEGLATFFA), 158-178 (AFAIAIHNIPEGIAIAVPVYF), 187-207 (FGASLLSGLAEPIGAGIGYLL), 211-231 (VLSEAVFGAVFGVIAGVMVFL), and 247-267 (HETVYGLVSGMGTLAISLVLF). Fe(2+) is bound by residues Asn-136 and Glu-139. Residues Glu-139 and His-164 each coordinate Zn(2+). Residues Asn-165, Glu-168, and Glu-197 each coordinate Fe(2+). Glu-168 lines the Zn(2+) pocket.

The protein belongs to the ZIP transporter (TC 2.A.5) family. ZupT subfamily.

It is found in the cell inner membrane. It carries out the reaction Zn(2+)(in) = Zn(2+)(out). Mediates zinc uptake. May also transport other divalent cations. The protein is Zinc transporter ZupT of Xanthomonas campestris pv. campestris (strain ATCC 33913 / DSM 3586 / NCPPB 528 / LMG 568 / P 25).